The sequence spans 417 residues: Glucose-1-phosphate adenylyltransferase (417 aa).

Alpha-D-glucose 1-phosphate contacts are provided by residues Tyr-105, Gly-170, 185–186 (EK), and Ser-203.

It belongs to the bacterial/plant glucose-1-phosphate adenylyltransferase family. In terms of assembly, homotetramer.

It catalyses the reaction alpha-D-glucose 1-phosphate + ATP + H(+) = ADP-alpha-D-glucose + diphosphate. The protein operates within glycan biosynthesis; glycogen biosynthesis. In terms of biological role, involved in the biosynthesis of ADP-glucose, a building block required for the elongation reactions to produce glycogen. Catalyzes the reaction between ATP and alpha-D-glucose 1-phosphate (G1P) to produce pyrophosphate and ADP-Glc. The chain is Glucose-1-phosphate adenylyltransferase from Granulibacter bethesdensis (strain ATCC BAA-1260 / CGDNIH1).